The sequence spans 307 residues: Putative oxidoreductase YceM (307 aa).

It belongs to the Gfo/Idh/MocA family.

This chain is Putative oxidoreductase YceM (yceM), found in Salmonella typhimurium (strain LT2 / SGSC1412 / ATCC 700720).